The chain runs to 429 residues: Serine--tRNA ligase (429 aa).

Position 236 to 238 (236 to 238) interacts with L-serine; the sequence is TAE. 267–269 serves as a coordination point for ATP; that stretch reads RSE. Glutamate 290 lines the L-serine pocket. 354-357 lines the ATP pocket; sequence EISS. Serine 390 contacts L-serine.

The protein belongs to the class-II aminoacyl-tRNA synthetase family. Type-1 seryl-tRNA synthetase subfamily. As to quaternary structure, homodimer. The tRNA molecule binds across the dimer.

It is found in the cytoplasm. It catalyses the reaction tRNA(Ser) + L-serine + ATP = L-seryl-tRNA(Ser) + AMP + diphosphate + H(+). The catalysed reaction is tRNA(Sec) + L-serine + ATP = L-seryl-tRNA(Sec) + AMP + diphosphate + H(+). It functions in the pathway aminoacyl-tRNA biosynthesis; selenocysteinyl-tRNA(Sec) biosynthesis; L-seryl-tRNA(Sec) from L-serine and tRNA(Sec): step 1/1. Functionally, catalyzes the attachment of serine to tRNA(Ser). Is also able to aminoacylate tRNA(Sec) with serine, to form the misacylated tRNA L-seryl-tRNA(Sec), which will be further converted into selenocysteinyl-tRNA(Sec). In Alcanivorax borkumensis (strain ATCC 700651 / DSM 11573 / NCIMB 13689 / SK2), this protein is Serine--tRNA ligase.